The following is a 412-amino-acid chain: CinA-like protein (412 aa).

Belongs to the CinA family.

This Syntrophotalea carbinolica (strain DSM 2380 / NBRC 103641 / GraBd1) (Pelobacter carbinolicus) protein is CinA-like protein.